The sequence spans 346 residues: ATP-dependent 6-phosphofructokinase (346 aa).

ATP is bound by residues G13, 76–77 (RL), and 106–109 (GEGT). E107 provides a ligand contact to Mg(2+). Substrate contacts are provided by residues 129-131 (TID), R166, 173-175 (MGR), E226, R270, and 276-279 (HIQR). D131 (proton acceptor) is an active-site residue.

Belongs to the phosphofructokinase type A (PFKA) family. Mixed-substrate PFK group III subfamily. As to quaternary structure, homodimer or homotetramer. Mg(2+) serves as cofactor.

Its subcellular location is the cytoplasm. It carries out the reaction beta-D-fructose 6-phosphate + ATP = beta-D-fructose 1,6-bisphosphate + ADP + H(+). The protein operates within carbohydrate degradation; glycolysis; D-glyceraldehyde 3-phosphate and glycerone phosphate from D-glucose: step 3/4. Functionally, catalyzes the phosphorylation of D-fructose 6-phosphate to fructose 1,6-bisphosphate by ATP, the first committing step of glycolysis. In Corynebacterium efficiens (strain DSM 44549 / YS-314 / AJ 12310 / JCM 11189 / NBRC 100395), this protein is ATP-dependent 6-phosphofructokinase.